The chain runs to 426 residues: Homeobox protein knotted-1-like LET12 (426 aa).

3 disordered regions span residues M1–A26, Q85–W158, and G270–D290. The segment covering Q15–Q24 has biased composition (low complexity). Residues A104–G114 show a composition bias toward gly residues. Low complexity predominate over residues E139–N151. The 21-residue stretch at E327–I347 folds into the ELK domain. A DNA-binding region (homeobox; TALE-type) is located at residues L348–N411. Residues R406–R426 form a disordered region. Over residues S413–R426 the composition is skewed to low complexity.

Belongs to the TALE/KNOX homeobox family. As to expression, ubiquitously expressed in the mature plant.

The protein localises to the nucleus. Its function is as follows. May have a role to play in formative events in ovule and embryo morphogenesis. The protein is Homeobox protein knotted-1-like LET12 (LET12) of Solanum lycopersicum (Tomato).